The following is a 258-amino-acid chain: Peptidase inhibitor 15 (258 aa).

An N-terminal signal peptide occupies residues 1-21; that stretch reads MIMNSAVSLVILLSLLCEAHT. Residues 22–60 constitute a propeptide that is removed on maturation; sequence VVLLNPTDSSLPANNFTDTEAALSTPLESADIPKARRKR. N-linked (GlcNAc...) asparagine glycans are attached at residues N36 and N124. The SCP domain maps to 71 to 211; that stretch reads LDYHNQVRGK…RRAVYLVCNY (141 aa).

It belongs to the CRISP family. Post-translationally, N-glycosylated. As to expression, weakly expressed. Expressed at low level in prostate, mammary gland, salivary gland and thyroid gland.

It localises to the secreted. Serine protease inhibitor which displays weak inhibitory activity against trypsin. May play a role in facial patterning during embryonic development. This chain is Peptidase inhibitor 15 (Pi15), found in Mus musculus (Mouse).